The following is a 376-amino-acid chain: Glutamate 5-kinase (376 aa).

K15 contacts ATP. Positions 56, 143, and 155 each coordinate substrate. An ATP-binding site is contributed by 175–176; sequence SD. In terms of domain architecture, PUA spans 281–358; it reads KGTLTIDAGA…PDVMMILGIS (78 aa).

The protein belongs to the glutamate 5-kinase family.

It localises to the cytoplasm. It carries out the reaction L-glutamate + ATP = L-glutamyl 5-phosphate + ADP. It functions in the pathway amino-acid biosynthesis; L-proline biosynthesis; L-glutamate 5-semialdehyde from L-glutamate: step 1/2. Catalyzes the transfer of a phosphate group to glutamate to form L-glutamate 5-phosphate. The sequence is that of Glutamate 5-kinase from Rhodopseudomonas palustris (strain BisB5).